The chain runs to 183 residues: Protein vem-1 (183 aa).

A helical transmembrane segment spans residues 9 to 29; sequence FTMYDAVFLVVVLGFFFYWLT. The region spanning 47–146 is the Cytochrome b5 heme-binding domain; it reads MSDMTVEELR…FKYLTVGRLV (100 aa).

Belongs to the cytochrome b5 family. MAPR subfamily. In terms of assembly, interacts with unc-40 (via cytoplasmic domain). Expressed in the AVG pioneer midline neuron and in several nerve ring neurons that extend projecting axons into the right ventral nerve cord.

Its subcellular location is the membrane. The protein localises to the cell projection. The protein resides in the axon. In terms of biological role, transmembrane protein required for the axon guidance of a subset of ventral nerve cord-associated interneurons and motor neurons. May function with the netrin receptor unc-40 in axon guidance. The protein is Protein vem-1 of Caenorhabditis elegans.